Consider the following 374-residue polypeptide: Chaperone protein DnaJ (374 aa).

Positions aspartate 4–glycine 68 constitute a J domain. The CR-type zinc-finger motif lies at glycine 133–serine 215. Zn(2+) contacts are provided by cysteine 146, cysteine 149, cysteine 163, cysteine 166, cysteine 189, cysteine 192, cysteine 203, and cysteine 206. CXXCXGXG motif repeat units follow at residues cysteine 146–glycine 153, cysteine 163–glycine 170, cysteine 189–glycine 196, and cysteine 203–glycine 210.

It belongs to the DnaJ family. As to quaternary structure, homodimer. It depends on Zn(2+) as a cofactor.

It localises to the cytoplasm. Participates actively in the response to hyperosmotic and heat shock by preventing the aggregation of stress-denatured proteins and by disaggregating proteins, also in an autonomous, DnaK-independent fashion. Unfolded proteins bind initially to DnaJ; upon interaction with the DnaJ-bound protein, DnaK hydrolyzes its bound ATP, resulting in the formation of a stable complex. GrpE releases ADP from DnaK; ATP binding to DnaK triggers the release of the substrate protein, thus completing the reaction cycle. Several rounds of ATP-dependent interactions between DnaJ, DnaK and GrpE are required for fully efficient folding. Also involved, together with DnaK and GrpE, in the DNA replication of plasmids through activation of initiation proteins. In Acaryochloris marina (strain MBIC 11017), this protein is Chaperone protein DnaJ.